A 125-amino-acid polypeptide reads, in one-letter code: Oxytocin-neurophysin 1 (125 aa).

Residues 1–19 (MAGPSLACCLLGLLALTSA) form the signal peptide. Cys20 and Cys25 are oxidised to a cystine. Gly28 is subject to Glycine amide. Intrachain disulfides connect Cys41/Cys85, Cys44/Cys58, Cys52/Cys75, Cys59/Cys65, Cys92/Cys104, Cys98/Cys116, and Cys105/Cys110.

It belongs to the vasopressin/oxytocin family. Interacts with oxytocin receptor (Ki=1.5 nM). Interacts with vasopressin V1aR/AVPR1A (Ki=37 nM), V1bR/AVPR1B (Ki=222 nM) and V2R/AVPR2 receptors (Ki=823 nM).

The protein localises to the secreted. Its function is as follows. Neurophysin 1 specifically binds oxytocin. Functionally, oxytocin causes contraction of the smooth muscle of the uterus and of the mammary gland. Acts by binding to oxytocin receptor (OXTR). In Homo sapiens (Human), this protein is Oxytocin-neurophysin 1 (OXT).